Consider the following 319-residue polypeptide: Putrescine hydroxycinnamoyltransferase 2 (319 aa).

Active-site proton acceptor residues include His-160 and Asp-301.

This sequence belongs to the plant acyltransferase family.

Hydroxycinnamoyl transferase that catalyzes the transfer of an acyl from p-coumaryol-CoA to putrescine, to produce coumaroyl putrescine. This Oryza sativa subsp. japonica (Rice) protein is Putrescine hydroxycinnamoyltransferase 2.